We begin with the raw amino-acid sequence, 405 residues long: Envelope glycoprotein M (405 aa).

Over 1 to 17 the chain is Intravirion; it reads MKSSKNDTFVYRTWVKT. A helical membrane pass occupies residues 18–38; the sequence is LVVYFVMFVMSAVVPITAMFP. Residues 39-76 lie on the Virion surface side of the membrane; that stretch reads NLGYPCYFNALVDYGALNLTNYNLAHHLTPTLYLEPPE. Residues 77–97 form a helical membrane-spanning segment; the sequence is MFVYITLVFIADCVAFIYYAC. Over 98–121 the chain is Intravirion; sequence GEVALIKARKKVSGLTDLSAWVSA. The helical transmembrane segment at 122–142 threads the bilayer; the sequence is VGSPTVLFLAILKLWSIQVFI. Over 143 to 149 the chain is Virion surface; the sequence is QVLSYKH. Residues 150 to 170 traverse the membrane as a helical segment; that stretch reads VFLSAFVYFLHFLASVLHACA. Over 171-192 the chain is Intravirion; sequence CVTRFSPVWVVKAQDNSIPQDT. A helical membrane pass occupies residues 193-215; it reads FLWWVVFYLKPVVTNLYLGCLAL. Over 216–245 the chain is Virion surface; the sequence is ETLVFSLSVFLALGNSFYFMVGDMVLGAVN. The chain crosses the membrane as a helical span at residues 246-266; the sequence is LFLILPIFWYILTEVWLASFL. R267 is a topological domain (intravirion). The helical transmembrane segment at 268–288 threads the bilayer; the sequence is HNFGFYCGMFIASIILILPLV. The Virion surface segment spans residues 289-299; sequence RYEAVFVSAKL. The helical transmembrane segment at 300–320 threads the bilayer; the sequence is HTTVAINVAIIPILCSVAMLI. The Intravirion portion of the chain corresponds to 321 to 405; sequence RICRIFKSMR…TTDSEEEIFP (85 aa). Positions 346-405 are disordered; that stretch reads LESEPRPRPSRTPSPGRNRRRSSTSSSSSRSTRRQRPVSTQALVSSVLPMTTDSEEEIFP. A compositionally biased stretch (polar residues) spans 386–397; sequence QALVSSVLPMTT.

It belongs to the herpesviridae glycoprotein M family. Interacts (via N-terminus) with gN (via N-terminus). The gM-gN heterodimer forms the gCII complex.

It localises to the virion membrane. The protein localises to the host Golgi apparatus. It is found in the host trans-Golgi network. Its subcellular location is the host endosome membrane. The protein resides in the host nucleus inner membrane. Functionally, envelope glycoprotein important for virion assembly and egress. Plays a role in the correct incorporation of gH-gL into virion membrane. Directs the glycoprotein N (gN) to the host trans-Golgi network. The sequence is that of Envelope glycoprotein M from Epstein-Barr virus (strain B95-8) (HHV-4).